The chain runs to 790 residues: Phenylalanine--tRNA ligase beta subunit (790 aa).

A tRNA-binding domain is found at 39 to 154 (PDSLNTVVTG…ENTPLGESAC (116 aa)). Residues 404–483 (SDPLSLNIRP…FVQKTQKILP (80 aa)) enclose the B5 domain. Mg(2+) is bound by residues D457, D463, E466, and E467. One can recognise an FDX-ACB domain in the interval 694–790 (PIYPSSSRDI…NLANIGKGNS (97 aa)).

It belongs to the phenylalanyl-tRNA synthetase beta subunit family. Type 1 subfamily. As to quaternary structure, tetramer of two alpha and two beta subunits. Mg(2+) serves as cofactor.

The protein localises to the cytoplasm. It catalyses the reaction tRNA(Phe) + L-phenylalanine + ATP = L-phenylalanyl-tRNA(Phe) + AMP + diphosphate + H(+). The sequence is that of Phenylalanine--tRNA ligase beta subunit (pheT) from Chlamydia muridarum (strain MoPn / Nigg).